The sequence spans 754 residues: 1,4-alpha-glucan branching enzyme GlgB (754 aa).

The active-site Nucleophile is the D431. E484 (proton donor) is an active-site residue.

It belongs to the glycosyl hydrolase 13 family. GlgB subfamily. As to quaternary structure, monomer.

It catalyses the reaction Transfers a segment of a (1-&gt;4)-alpha-D-glucan chain to a primary hydroxy group in a similar glucan chain.. The protein operates within glycan biosynthesis; glycogen biosynthesis. Its function is as follows. Catalyzes the formation of the alpha-1,6-glucosidic linkages in glycogen by scission of a 1,4-alpha-linked oligosaccharide from growing alpha-1,4-glucan chains and the subsequent attachment of the oligosaccharide to the alpha-1,6 position. The polypeptide is 1,4-alpha-glucan branching enzyme GlgB (Prochlorococcus marinus subsp. pastoris (strain CCMP1986 / NIES-2087 / MED4)).